Consider the following 127-residue polypeptide: Riboflavin kinase (127 aa).

10-15 is a CDP binding site; sequence GLGEGR. Mg(2+)-binding residues include T39 and N41. 2 residues coordinate FMN: T96 and E104. Residue 109–112 participates in CDP binding; that stretch reads IQLR.

It belongs to the archaeal riboflavin kinase family. Mg(2+) serves as cofactor.

The enzyme catalyses riboflavin + CTP = CDP + FMN + H(+). It participates in cofactor biosynthesis; FMN biosynthesis; FMN from riboflavin (CTP route): step 1/1. In terms of biological role, catalyzes the CTP-dependent phosphorylation of riboflavin (vitamin B2) to form flavin mononucleotide (FMN). The chain is Riboflavin kinase from Methanococcus maripaludis (strain C5 / ATCC BAA-1333).